A 409-amino-acid chain; its full sequence is Formyl-CoA:oxalate CoA-transferase (409 aa).

Residues 17–18 (QS), 71–74 (LNTK), 95–97 (NFG), R103, and 135–138 (KAYE) contribute to the CoA site. Catalysis depends on D167, which acts as the Nucleophile. Positions 221–245 (LAEYPNDDFGDEVPRSGNASGGGQP) are disordered. Residue 242-244 (GGQ) coordinates substrate.

It belongs to the CoA-transferase III family. Frc subfamily. Homodimer.

The enzyme catalyses formyl-CoA + oxalate = oxalyl-CoA + formate. The protein operates within metabolic intermediate degradation; oxalate degradation; CO(2) and formate from oxalate: step 1/2. Involved in the catabolism of oxalate and in the adapatation to low pH via the induction of the oxalate-dependent acid tolerance response (ATR). Catalyzes the transfer of the CoA moiety from formyl-CoA to oxalate. This is Formyl-CoA:oxalate CoA-transferase from Streptomyces avermitilis (strain ATCC 31267 / DSM 46492 / JCM 5070 / NBRC 14893 / NCIMB 12804 / NRRL 8165 / MA-4680).